We begin with the raw amino-acid sequence, 183 residues long: Ribosome-recycling factor (183 aa).

This sequence belongs to the RRF family.

It localises to the cytoplasm. Functionally, responsible for the release of ribosomes from messenger RNA at the termination of protein biosynthesis. May increase the efficiency of translation by recycling ribosomes from one round of translation to another. The sequence is that of Ribosome-recycling factor from Mycoplasmoides gallisepticum (strain R(low / passage 15 / clone 2)) (Mycoplasma gallisepticum).